The chain runs to 873 residues: Chitin synthase F (873 aa).

The segment at 1 to 105 (MEDAHDQSSR…KSGSGLRRYP (105 aa)) is disordered. Composition is skewed to polar residues over residues 33–46 (SYPS…SQSL), 58–72 (ISSQ…QNPS), and 80–98 (ESEV…TKSG). Asn506 is a glycosylation site (N-linked (GlcNAc...) asparagine). The next 7 helical transmembrane spans lie at 532–554 (LVFL…FSLA), 588–608 (IVNN…FFLA), 621–641 (ILTF…SFYL), 672–692 (GLVL…SILY), 702–722 (SWAY…YAFC), 802–822 (LVLL…NDSV), and 841–861 (VILW…LWFL).

This sequence belongs to the chitin synthase family. Class III subfamily.

The protein resides in the cell membrane. The enzyme catalyses [(1-&gt;4)-N-acetyl-beta-D-glucosaminyl](n) + UDP-N-acetyl-alpha-D-glucosamine = [(1-&gt;4)-N-acetyl-beta-D-glucosaminyl](n+1) + UDP + H(+). Polymerizes chitin, a structural polymer of the cell wall and septum, by transferring the sugar moiety of UDP-GlcNAc to the non-reducing end of the growing chitin polymer. Plays an important role in septal growth or maintenance. Mediates colony spore formation. In Aspergillus niger (strain ATCC MYA-4892 / CBS 513.88 / FGSC A1513), this protein is Chitin synthase F.